Reading from the N-terminus, the 346-residue chain is Acetyl-coenzyme A carboxylase carboxyl transferase subunit beta (346 aa).

Positions 24-292 constitute a CoA carboxyltransferase N-terminal domain; the sequence is LWIKCPKSGD…LPEVEPIAVA (269 aa). The segment covering 300-311 has biased composition (acidic residues); sequence AEAEAAPDEVVE. Positions 300–346 are disordered; the sequence is AEAEAAPDEVVEVEAPAVDEIVEEKPAATKAKPRSKAKSKAAPKTDE. Basic residues predominate over residues 330–340; it reads AKPRSKAKSKA.

This sequence belongs to the AccD/PCCB family. Acetyl-CoA carboxylase is a heterohexamer composed of biotin carboxyl carrier protein (AccB), biotin carboxylase (AccC) and two subunits each of ACCase subunit alpha (AccA) and ACCase subunit beta (AccD).

It is found in the cytoplasm. The enzyme catalyses N(6)-carboxybiotinyl-L-lysyl-[protein] + acetyl-CoA = N(6)-biotinyl-L-lysyl-[protein] + malonyl-CoA. The protein operates within lipid metabolism; malonyl-CoA biosynthesis; malonyl-CoA from acetyl-CoA: step 1/1. In terms of biological role, component of the acetyl coenzyme A carboxylase (ACC) complex. Biotin carboxylase (BC) catalyzes the carboxylation of biotin on its carrier protein (BCCP) and then the CO(2) group is transferred by the transcarboxylase to acetyl-CoA to form malonyl-CoA. This is Acetyl-coenzyme A carboxylase carboxyl transferase subunit beta from Hirschia baltica (strain ATCC 49814 / DSM 5838 / IFAM 1418).